We begin with the raw amino-acid sequence, 994 residues long: Chloride channel protein 1 (994 aa).

Topologically, residues 1 to 118 (MERSQSQQHG…VLRRKLGEDW (118 aa)) are cytoplasmic. A disordered region spans residues 37 to 61 (SENGGLQHRPRKDLGPRHNAHPTQI). A helical transmembrane segment spans residues 119–150 (IFLVLLGLLMALVSWCMDYVSAKSLQAYKWTY). Topologically, residues 151–158 (AQMQPSLP) are extracellular. Residues 159-179 (LQYLAWVTFPLILILFSALFC) form a helical membrane-spanning segment. Topologically, residues 180–183 (QLIS) are cytoplasmic. The segment at residues 184–189 (PQAVGS) is an intramembrane region (note=Loop between two helices). The short motif at 188–192 (GSGIP) is the Selectivity filter part_1 element. Ser189 lines the chloride pocket. The helical intramembrane region spans 190–195 (GIPEMK). Residues 196-208 (TILRGVVLKEYLT) are Cytoplasmic-facing. An intramembrane region (helical) is located at residues 209 to 224 (LKAFVAKVVALTAGLG). An intramembrane region (note=Loop between two helices) is located at residues 225-230 (SGIPVG). Positions 230 to 234 (GKEGP) match the Selectivity filter part_2 motif. The segment at residues 231–246 (KEGPFVHIASICAAVL) is an intramembrane region (helical). The Cytoplasmic segment spans residues 247 to 268 (SKFMSMFSGVYEQPYYYTDILT). Intramembrane regions (helical) lie at residues 269-280 (VGCAVGVGCCFG) and 281-290 (TPLGGVLFSI). Topologically, residues 291–301 (EVTSTYFAVRN) are cytoplasmic. Residues 302–321 (YWRGFFAATFSAFVFRVLAV) form a helical membrane-spanning segment. The Extracellular segment spans residues 322 to 347 (WNKDAVTITALFRTNFRMDFPFDLKE). A helical transmembrane segment spans residues 348-376 (LPAFAVIGICCGFLGAVFVYLHRQVMLGV). The Cytoplasmic segment spans residues 377-390 (RKHKALSQFLAKHR). A helical transmembrane segment spans residues 391 to 408 (LLYPGIVTFVIASLTFPP). The Extracellular portion of the chain corresponds to 409 to 414 (GMGQFM). The segment at residues 415–418 (AGEL) is an intramembrane region (note=Loop between two helices). Residues 419–426 (MPREAIST) constitute an intramembrane region (helical). Over 427–457 (LFDNNTWVKHIGDPKSLGQSAVWIHPQVNVV) the chain is Extracellular. The segment at residues 458–475 (IIILLFFVMKFWMSIVAT) is an intramembrane region (helical). Residues 476-482 (TMPIPCG) constitute an intramembrane region (note=Loop between two helices). Positions 482 to 486 (GGFMP) match the Selectivity filter part_3 motif. An intramembrane region (helical) is located at residues 483-498 (GFMPVFVLGAAFGRLV). Phe484 is a chloride binding site. The Extracellular portion of the chain corresponds to 499-521 (GEIMAMLFPEGILFDDIIYKILP). The segment at residues 522–538 (GGYAVIGAAALTGAVSH) is an intramembrane region (helical). Positions 539-540 (TV) form an intramembrane region, note=Loop between two helices. The helical intramembrane region spans 541-554 (STAVICFELTGQIA). The Extracellular segment spans residues 555 to 557 (HIL). Positions 558–571 (PMMVAVILANMVAQ) form an intramembrane region, helical. Residues 572–575 (SLQP) constitute an intramembrane region (note=Loop between two helices). An intramembrane region (helical) is located at residues 576–578 (SLY). Tyr578 contacts chloride. At 579 to 994 (DSIIQVKKLP…DEEDEDELIL (416 aa)) the chain is on the cytoplasmic side. In terms of domain architecture, CBS 1 spans 609-668 (MVRDVKFVSASCTYGELRNLLQTTTVKTLPLVDSKDSMILLGSVERSELQSLLQRHLCAE). Disordered regions lie at residues 710–769 (EDED…SADQ), 880–923 (TKSG…DGAP), and 965–994 (NLGP…ELIL). Positions 725–741 (TPTPPPPPPPPLPPQFP) are enriched in pro residues. One can recognise a CBS 2 domain in the interval 827–882 (IDQSPFQLVEQTTLHKTHTLFSLLGLHLAYVTSMGKLRGVLALEELQKAIKGHTKS). At Ser892 the chain carries Phosphoserine. Residues 985–994 (DEEDEDELIL) show a composition bias toward acidic residues.

The protein belongs to the chloride channel (TC 2.A.49) family. ClC-1/CLCN1 subfamily. As to quaternary structure, homodimer. As to expression, predominantly expressed in skeletal muscles.

The protein resides in the cell membrane. It is found in the sarcolemma. Its subcellular location is the T-tubule. The catalysed reaction is chloride(in) = chloride(out). The enzyme catalyses bromide(in) = bromide(out). It catalyses the reaction iodide(out) = iodide(in). It carries out the reaction thiocyanate(in) = thiocyanate(out). The catalysed reaction is nitrate(in) = nitrate(out). With respect to regulation, modulated by membrane voltage with depolarization favouring channel opening and hyperpolarization favouring channel closure. Inhibited by acidic pH and ATP binding due to a shift of voltage dependence of common gating to more positive voltages. Inhibited by 9-anthracene-carboxylic acid. In terms of biological role, voltage-gated chloride channel involved in skeletal muscle excitability. Generates most of the plasma membrane chloride conductance in skeletal muscle fibers, stabilizes the resting membrane potential and contributes to the repolarization phase during action potential firing. Forms a homodimeric channel where each subunit has its own ion conduction pathway. Conducts double-barreled currents controlled by two types of gates, two fast glutamate gates that control each subunit independently and a slow common gate that opens and shuts off both subunits simultaneously. Has a significant open probability at muscle resting potential and is further activated upon membrane depolarization. Permeable to small monovalent anions with ion selectivity for chloride &gt; thiocyanate &gt; bromide &gt; nitrate &gt; iodide. The sequence is that of Chloride channel protein 1 (Clcn1) from Rattus norvegicus (Rat).